The sequence spans 1036 residues: Protein smoothened (1036 aa).

Positions 1–31 are cleaved as a signal peptide; the sequence is MQYLNFPRMPNIMMFLEVAILCLWVVADASA. Over 32–258 the chain is Extracellular; it reads SSAKFGSTTP…DDEHRQIHKL (227 aa). Asn55 and Asn95 each carry an N-linked (GlcNAc...) asparagine glycan. One can recognise an FZ domain in the interval 85–206; the sequence is VRRARCYPTS…TLFPTKCTNG (122 aa). 4 cysteine pairs are disulfide-bonded: Cys90–Cys155, Cys100–Cys148, Cys139–Cys179, and Cys172–Cys194. Residues Asn184, Asn195, and Asn213 are each glycosylated (N-linked (GlcNAc...) asparagine). 2 cysteine pairs are disulfide-bonded: Cys218–Cys238 and Cys242–Cys320. A helical membrane pass occupies residues 259–279; sequence IGWAGSICLLSNLFVVSTFFI. Residues 280 to 287 are Cytoplasmic-facing; it reads DWKNANKY. The helical transmembrane segment at 288 to 308 threads the bilayer; sequence PAVIVFYINLCFLIACVGWLL. Residues 309–339 lie on the Extracellular side of the membrane; the sequence is QFTSGSREDIVCRKDGTLRHSEPTAGENLSC. The N-linked (GlcNAc...) asparagine glycan is linked to Asn336. A disulfide bridge links Cys339 with Cys413. Residues 340 to 360 traverse the membrane as a helical segment; sequence IVIFVLVYYFLTAGMVWFVFL. Residues 361-381 are Cytoplasmic-facing; sequence TYAWHWRAMGHVQDRIDKKGS. Residues 382 to 402 traverse the membrane as a helical segment; that stretch reads YFHLVAWSLPLVLTITTMAFS. Residues 403–421 are Extracellular-facing; it reads EVDGNSIVGICFVGYINHS. N-linked (GlcNAc...) asparagine glycosylation occurs at Asn419. A helical membrane pass occupies residues 422-442; it reads MRAGLLLGPLCGVILIGGYFI. Topologically, residues 443 to 469 are cytoplasmic; sequence TRGMVMLFGLKHFANDIKSTSASNKIH. The helical transmembrane segment at 470–490 threads the bilayer; sequence LIIMRMGVCALLTLVFILVAI. Residues 491–532 lie on the Extracellular side of the membrane; the sequence is ACHVTEFRHADEWAQSFRQFIICKISSVFEEKSSCRIENRPS. Cys513 and Cys525 are disulfide-bonded. A helical transmembrane segment spans residues 533–553; sequence VGVLQLHLLCLFSSGIVMSTW. The Cytoplasmic segment spans residues 554 to 1036; that stretch reads CWTPSSIETW…KLKMLLLPSK (483 aa). Ser658, Ser659, Ser667, Ser670, Ser673, Ser687, Ser690, and Ser693 each carry phosphoserine. 2 disordered regions span residues 678–745 and 870–902; these read HVSV…TSVE and IKKS…KNPA. Over residues 880–899 the composition is skewed to basic residues; the sequence is RHSRNSARSQSKKSQKRHLK.

It belongs to the G-protein coupled receptor Fz/Smo family. As to quaternary structure, interacts with cos. Phosphorylation by CkIalpha and PKA regulates smo accumulation at the cell surface and its signaling activity in response to hh. In terms of tissue distribution, expressed in olfactory sensory neurons (at protein level).

The protein localises to the cell membrane. Its subcellular location is the cell projection. It localises to the cilium. Segment polarity protein required for correct patterning of every segment. G protein-coupled receptor which associates with the patched protein (ptc) to transduce the hedgehog (hh) signal through the activation of an inhibitory G-protein. In the absence of hh, ptc represses the constitutive signaling activity of smo through fused (fu). Essential component of a hh-signaling pathway which regulates the Duox-dependent gut immune response to bacterial uracil; required to activate Cad99C-dependent endosome formation, norpA-dependent Ca2+ mobilization and p38 MAPK, which are essential steps in the Duox-dependent production of reactive oxygen species (ROS) in response to intestinal bacterial infection. This chain is Protein smoothened (smo), found in Drosophila melanogaster (Fruit fly).